The following is a 332-amino-acid chain: Ribosomal RNA small subunit methyltransferase H (332 aa).

S-adenosyl-L-methionine is bound by residues 37 to 39 (GGY), Asp55, Phe82, Asp103, and Gln110. The segment at 281 to 332 (TKRPVTPSDEETAANPRARSAKLRAGERTAAPAQPEAPLPHWPTLASVMGRR) is disordered.

This sequence belongs to the methyltransferase superfamily. RsmH family.

It is found in the cytoplasm. It catalyses the reaction cytidine(1402) in 16S rRNA + S-adenosyl-L-methionine = N(4)-methylcytidine(1402) in 16S rRNA + S-adenosyl-L-homocysteine + H(+). Functionally, specifically methylates the N4 position of cytidine in position 1402 (C1402) of 16S rRNA. The protein is Ribosomal RNA small subunit methyltransferase H of Rhodopseudomonas palustris (strain BisA53).